We begin with the raw amino-acid sequence, 276 residues long: F420-dependent methylenetetrahydromethanopterin dehydrogenase (276 aa).

It belongs to the MTD family.

The catalysed reaction is 5,10-methylenetetrahydromethanopterin + oxidized coenzyme F420-(gamma-L-Glu)(n) + 2 H(+) = 5,10-methenyl-5,6,7,8-tetrahydromethanopterin + reduced coenzyme F420-(gamma-L-Glu)(n). The protein operates within one-carbon metabolism; methanogenesis from CO(2); 5,10-methylene-5,6,7,8-tetrahydromethanopterin from 5,10-methenyl-5,6,7,8-tetrahydromethanopterin (coenzyme F420 route): step 1/1. Catalyzes the reversible reduction of methenyl-H(4)MPT(+) to methylene-H(4)MPT. In Methanococcus vannielii (strain ATCC 35089 / DSM 1224 / JCM 13029 / OCM 148 / SB), this protein is F420-dependent methylenetetrahydromethanopterin dehydrogenase.